The chain runs to 112 residues: cAMP-regulated phosphoprotein 19 (112 aa).

Methionine 1 carries the post-translational modification N-acetylmethionine. Residues 1–11 (MSAEVPEAASA) are compositionally biased toward low complexity. The disordered stretch occupies residues 1–49 (MSAEVPEAASAEEQKEMEDKVTSPEKAEEAKLKARYPHLGQKPGGSDFL). The residue at position 2 (serine 2) is an N-acetylserine. 2 positions are modified to phosphoserine: serine 2 and serine 23. The span at 12–32 (EEQKEMEDKVTSPEKAEEAKL) shows a compositional bias: basic and acidic residues. A phosphoserine; by GWL mark is found at serine 62 and serine 104. The interval 74–112 (NKQLPAAAPDKTEVTGDHIPTPQDLPQRKPSLVASKLAG) is disordered. The residue at position 104 (serine 104) is a Phosphoserine; by PKA. Lysine 109 is modified (N6-acetyllysine).

It belongs to the endosulfine family. As to quaternary structure, interacts (when phosphorylated at Ser-62) with PPP2R2D. Interacts with SNCA. Interacts with PPP2R2A; the interaction is direct and this interaction inhibits PP2A activity. Phosphorylation at Ser-62 by MASTL/GWL during mitosis is essential for interaction with PPP2R2D (PR55-delta) and subsequent inactivation of PP2A. Phosphorylated by PKA.

It localises to the cytoplasm. Its function is as follows. Protein phosphatase inhibitor that specifically inhibits protein phosphatase 2A (PP2A) during mitosis. Inhibition of PP2A is enhanced when ARPP19 is phosphorylated. When phosphorylated at Ser-62 during mitosis, specifically interacts with PPP2R2D (PR55-delta) and inhibits its activity, leading to inactivation of PP2A, an essential condition to keep cyclin-B1-CDK1 activity high during M phase. May indirectly enhance GAP-43 expression by binding to the NGF-regulatory region of its mRNA. The protein is cAMP-regulated phosphoprotein 19 (Arpp19) of Mus musculus (Mouse).